The primary structure comprises 216 residues: Octanoyltransferase (216 aa).

Positions 24–212 constitute a BPL/LPL catalytic domain; that stretch reads KFRKECILFL…NLCSFLEPIN (189 aa). Substrate-binding positions include 69–76, 140–142, and 153–155; these read RGGDFTAH, SIG, and GIA. Catalysis depends on Cys-171, which acts as the Acyl-thioester intermediate.

It belongs to the LipB family.

It localises to the cytoplasm. It carries out the reaction octanoyl-[ACP] + L-lysyl-[protein] = N(6)-octanoyl-L-lysyl-[protein] + holo-[ACP] + H(+). It functions in the pathway protein modification; protein lipoylation via endogenous pathway; protein N(6)-(lipoyl)lysine from octanoyl-[acyl-carrier-protein]: step 1/2. Catalyzes the transfer of endogenously produced octanoic acid from octanoyl-acyl-carrier-protein onto the lipoyl domains of lipoate-dependent enzymes. Lipoyl-ACP can also act as a substrate although octanoyl-ACP is likely to be the physiological substrate. The sequence is that of Octanoyltransferase from Leptospira interrogans serogroup Icterohaemorrhagiae serovar copenhageni (strain Fiocruz L1-130).